A 350-amino-acid polypeptide reads, in one-letter code: Divinyl chlorophyll a/b light-harvesting protein PcbB (350 aa).

A run of 6 helical transmembrane segments spans residues 27–47, 89–109, 141–161, 202–222, 244–264, and 305–325; these read FLAAHIAHTGLMAFWAGSFTL, IVVTAVLHLVLSMVYAAGGLM, FILGHHLFLLGLGNVQFVEWA, VMGGHAFLALFMMSGGLWHIV, LSWALAGVGWMALVAAFWCAS, and LTNIHYYLGFFYIQGHLWHAL.

It belongs to the PsbB/PsbC family. IsiA/Pcb subfamily. As to quaternary structure, the antenna complex consists of divinyl chlorophylls (a and b) and divinyl chlorophyll a/b binding proteins. Under iron-starvation forms a complex with PSI, consisting of a PSI trimer surrounded by a ring composed of 18 PcbB subunits. Divinyl chlorophyll a is required as a cofactor. It depends on divinyl chlorophyll b as a cofactor.

The protein localises to the cellular thylakoid membrane. The antenna complex functions as a light receptor, it captures and delivers excitation energy to photosystems I. The Prochlorales pcb genes are not related to higher plant LHCs. The polypeptide is Divinyl chlorophyll a/b light-harvesting protein PcbB (pcbB) (Prochlorococcus marinus (strain MIT 9313)).